The following is a 173-amino-acid chain: Chorion protein S19 (173 aa).

A signal peptide spans Met1 to Ala21.

This sequence belongs to the chorion protein S19 family.

It localises to the secreted. In terms of biological role, chorion membrane (egg shell) protein; plays a role in protecting the egg from the environment. The protein is Chorion protein S19 (Cp19) of Drosophila melanogaster (Fruit fly).